The primary structure comprises 343 residues: Transcription factor MYB83 (343 aa).

The span at 1 to 16 (MMMRKPDITTIRDKGK) shows a compositional bias: basic and acidic residues. The tract at residues 1–33 (MMMRKPDITTIRDKGKPNHACGGNNNKPKLRKG) is disordered. 2 consecutive HTH myb-type domains span residues 27 to 79 (KPKL…INYL) and 80 to 134 (RPDL…KKRL). 2 consecutive DNA-binding regions (H-T-H motif) follow at residues 55–79 (WSDIARNAGLLRCGKSCRLRWINYL) and 107–130 (WSQIATRLPGRTDNEIKNFWNSTL). A disordered region spans residues 134–172 (LKNNSNNNTSSGSSPNNSNSNSLDPRDQHVDMGGNSTSL). The segment covering 136-155 (NNSNNNTSSGSSPNNSNSNS) has biased composition (low complexity).

In terms of tissue distribution, expressed specifically in fiber and vessel cells that are undergoing secondary wall thickening in floral stems. Expressed in vessels but not in xylary fibers in the developing secondary xylem of roots.

The protein localises to the nucleus. Functionally, transcription factor that acts as a molecular switch in the NAC012/SND1-mediated transcriptional network regulating secondary wall biosynthesis. Is directly activated by NAC012/SND1 and its close homologs, including NAC043/NST1, NAC066/NST2, NAC101/VND6 and NAC030/VND7. Is required for functional expression of a number of secondary wall-associated transcription factors and secondary wall biosynthetic genes involved in cellulose, xylan and lignin synthesis. Functions redundantly with MYB46 in the transcriptional regulatory cascade leading to secondary wall formation in fibers and vessels. Transcription activator that binds to the DNA consensus sequence 5'-ACC[AT]A[AC][TC]-3', designated as the secondary wall MYB-responsive element (SMRE). Regulates directly numerous transcription factors and a number of genes involved in secondary wall biosynthesis that contain SMRE elements in their promoters. This is Transcription factor MYB83 from Arabidopsis thaliana (Mouse-ear cress).